A 287-amino-acid polypeptide reads, in one-letter code: AA9 family lytic polysaccharide monooxygenase D (287 aa).

Positions 1–17 (MKLSLLAAAAIAPMVSA) are cleaved as a signal peptide. His18 contributes to the Cu(2+) binding site. Cys67 and Cys189 are disulfide-bonded. Residue His176 participates in O2 binding. Tyr186 contributes to the Cu(2+) binding site. N-linked (GlcNAc...) asparagine glycosylation is found at Asn220 and Asn250. The disordered stretch occupies residues 239 to 287 (TGGSGSSTGSYNESNAEDSNEYPYQKESGTCQSNFYRREHARDFSHRRA). Residues 274–287 (YRREHARDFSHRRA) are compositionally biased toward basic and acidic residues.

This sequence belongs to the polysaccharide monooxygenase AA9 family. Cu(2+) serves as cofactor.

The protein localises to the secreted. The enzyme catalyses [(1-&gt;4)-beta-D-glucosyl]n+m + reduced acceptor + O2 = 4-dehydro-beta-D-glucosyl-[(1-&gt;4)-beta-D-glucosyl]n-1 + [(1-&gt;4)-beta-D-glucosyl]m + acceptor + H2O.. Lytic polysaccharide monooxygenase (LPMO) that depolymerizes crystalline and amorphous polysaccharides via the oxidation of scissile alpha- or beta-(1-4)-glycosidic bonds, yielding C1 oxidation products. Catalysis by LPMOs requires the reduction of the active-site copper from Cu(II) to Cu(I) by a reducing agent and H(2)O(2) or O(2) as a cosubstrate. Active on celluloseas as well as on the hemicellulose xyloglucan. Shows synergy with other hydrolases in degrading sorghum stover. This chain is AA9 family lytic polysaccharide monooxygenase D, found in Emericella nidulans (strain FGSC A4 / ATCC 38163 / CBS 112.46 / NRRL 194 / M139) (Aspergillus nidulans).